The primary structure comprises 571 residues: Cytoplasmic polyadenylation element-binding protein 2 (571 aa).

Disordered stretches follow at residues 1 to 23 and 51 to 75; these read MSKS…NGDR and FKQN…VSQE. The segment covering 61–75 has biased composition (basic and acidic residues); it reads SESRHENEENKVSQE. An RRM domain is found at 435–517; it reads LVAFIGGVPR…KRVEIKPYFF (83 aa).

In terms of biological role, cytoplasmic polyadenylation element binding protein that binds to and regulates the translation of specific mRNAs. The chain is Cytoplasmic polyadenylation element-binding protein 2 (cpb-2) from Caenorhabditis remanei (Caenorhabditis vulgaris).